Here is a 446-residue protein sequence, read N- to C-terminus: Exodeoxyribonuclease 7 large subunit (446 aa).

It belongs to the XseA family. Heterooligomer composed of large and small subunits.

It is found in the cytoplasm. The catalysed reaction is Exonucleolytic cleavage in either 5'- to 3'- or 3'- to 5'-direction to yield nucleoside 5'-phosphates.. Functionally, bidirectionally degrades single-stranded DNA into large acid-insoluble oligonucleotides, which are then degraded further into small acid-soluble oligonucleotides. The polypeptide is Exodeoxyribonuclease 7 large subunit (Streptococcus thermophilus (strain ATCC BAA-250 / LMG 18311)).